Here is a 249-residue protein sequence, read N- to C-terminus: MPRYRITIEYDGRPFSGWQRQDNAPSVQESLERAAEKLDGAPVLVYGAGRTDSGVHALAQVAHLDLAKDLSTDKVRDAINYHLKPDPVAVIEAARVSDDFHARFSATRRHYLYRMIDRRAPLTLDRGQVWRVTRKLDAEAMHHAAQALLGQHDFTTFRDAQCQAESPVKSLDAISVSRYGEEVQLTCSARSFLHRQVRSMVGSLVEVGVGKWSARDFKRALDAADRSRCGPVAPADGLYLTAVDYPGPA.

Catalysis depends on D52, which acts as the Nucleophile. Y111 is a binding site for substrate.

It belongs to the tRNA pseudouridine synthase TruA family. Homodimer.

The catalysed reaction is uridine(38/39/40) in tRNA = pseudouridine(38/39/40) in tRNA. Functionally, formation of pseudouridine at positions 38, 39 and 40 in the anticodon stem and loop of transfer RNAs. This chain is tRNA pseudouridine synthase A, found in Maricaulis maris (strain MCS10) (Caulobacter maris).